Here is a 146-residue protein sequence, read N- to C-terminus: Hemoglobin subunit beta-2 (146 aa).

Residues 2-146 enclose the Globin domain; sequence GLTAHEKQLI…IADALGKGYH (145 aa). Heme b is bound by residues H63 and H92.

Belongs to the globin family. In terms of assembly, heterotetramer of two alpha chains and two beta chains. As to expression, red blood cells.

Functionally, involved in oxygen transport from the lung to the various peripheral tissues. The sequence is that of Hemoglobin subunit beta-2 (hbb2) from Xenopus borealis (Kenyan clawed frog).